A 951-amino-acid polypeptide reads, in one-letter code: Glycine dehydrogenase (decarboxylating) 1 (951 aa).

Residue K703 is modified to N6-(pyridoxal phosphate)lysine.

Belongs to the GcvP family. The glycine cleavage system is composed of four proteins: P, T, L and H. The cofactor is pyridoxal 5'-phosphate.

The enzyme catalyses N(6)-[(R)-lipoyl]-L-lysyl-[glycine-cleavage complex H protein] + glycine + H(+) = N(6)-[(R)-S(8)-aminomethyldihydrolipoyl]-L-lysyl-[glycine-cleavage complex H protein] + CO2. The glycine cleavage system catalyzes the degradation of glycine. The P protein binds the alpha-amino group of glycine through its pyridoxal phosphate cofactor; CO(2) is released and the remaining methylamine moiety is then transferred to the lipoamide cofactor of the H protein. This chain is Glycine dehydrogenase (decarboxylating) 1 (gcvP1), found in Pseudomonas putida (strain ATCC 47054 / DSM 6125 / CFBP 8728 / NCIMB 11950 / KT2440).